A 126-amino-acid chain; its full sequence is Aspartate 1-decarboxylase (126 aa).

The active-site Schiff-base intermediate with substrate; via pyruvic acid is Ser-25. Ser-25 carries the pyruvic acid (Ser) modification. Substrate is bound at residue Thr-57. Residue Tyr-58 is the Proton donor of the active site. Position 73-75 (73-75 (GAA)) interacts with substrate.

This sequence belongs to the PanD family. In terms of assembly, heterooctamer of four alpha and four beta subunits. The cofactor is pyruvate. Post-translationally, is synthesized initially as an inactive proenzyme, which is activated by self-cleavage at a specific serine bond to produce a beta-subunit with a hydroxyl group at its C-terminus and an alpha-subunit with a pyruvoyl group at its N-terminus.

It localises to the cytoplasm. The enzyme catalyses L-aspartate + H(+) = beta-alanine + CO2. It functions in the pathway cofactor biosynthesis; (R)-pantothenate biosynthesis; beta-alanine from L-aspartate: step 1/1. Catalyzes the pyruvoyl-dependent decarboxylation of aspartate to produce beta-alanine. The polypeptide is Aspartate 1-decarboxylase (Escherichia coli O6:H1 (strain CFT073 / ATCC 700928 / UPEC)).